The chain runs to 777 residues: Aconitate hydratase, mitochondrial (777 aa).

Residues Gln96 and 189 to 191 (DSH) each bind substrate. [4Fe-4S] cluster is bound by residues Cys383, Cys446, and Cys449. Residues Arg472, Arg477, Arg605, and 668 to 669 (SR) contribute to the substrate site.

This sequence belongs to the aconitase/IPM isomerase family. In terms of assembly, monomer. [4Fe-4S] cluster is required as a cofactor.

It localises to the mitochondrion. It carries out the reaction citrate = D-threo-isocitrate. It participates in carbohydrate metabolism; tricarboxylic acid cycle; isocitrate from oxaloacetate: step 2/2. In terms of biological role, catalyzes the isomerization of citrate to isocitrate via cis-aconitate, a step in the citric acid cycle. The polypeptide is Aconitate hydratase, mitochondrial (ACO1) (Candida albicans (strain SC5314 / ATCC MYA-2876) (Yeast)).